Reading from the N-terminus, the 141-residue chain is Organic hydroperoxide resistance protein OhrA (141 aa).

Belongs to the OsmC/Ohr family.

In terms of biological role, involved in organic hydroperoxide resistance. In Bacillus subtilis (strain 168), this protein is Organic hydroperoxide resistance protein OhrA (ohrA).